The primary structure comprises 420 residues: MGMTMIEKIIAAHTNRDKVKPGDIVNARIDFVLGNDVTTPVAVKEFNKIGIDEVFDQDRIAIVPDHFTPNKDIKSAEQCKFIREFARDKGIHNYFEIGEMGIEHCLLPEKGLALPGEIIIGADSHTCTYGALGAFATGVGSTDMAAAMATGYTWFKVPSTIQFVYNGELKPWVSGKDLILYTIGDIGVDGALYRAMEFTGETIENLSMDNRMTISNMAIEAGGKCGLIAPDEKTFKYLENRAQRDYTPCYSDDDAEYEKVIEYDVSDIEPQVAFPHLPENTRPISEEGDIKIDQAVIGSCTNGRMEDLRIAAGILKEKQVHHDVRCIVIPGTQDIYKQALKEGLIEIFIEAGAAVSTPTCGPCLGGHMGILARGEKAIATTNRNFVGRMGHPESEVYLANPAVAAASAIKGYIAHPEEVL.

Residues Cys-300, Cys-360, and Cys-363 each contribute to the [4Fe-4S] cluster site.

It belongs to the aconitase/IPM isomerase family. LeuC type 2 subfamily. In terms of assembly, heterodimer of LeuC and LeuD. [4Fe-4S] cluster serves as cofactor.

It carries out the reaction (2R,3S)-3-isopropylmalate = (2S)-2-isopropylmalate. Its pathway is amino-acid biosynthesis; L-leucine biosynthesis; L-leucine from 3-methyl-2-oxobutanoate: step 2/4. Catalyzes the isomerization between 2-isopropylmalate and 3-isopropylmalate, via the formation of 2-isopropylmaleate. The polypeptide is 3-isopropylmalate dehydratase large subunit (Halothermothrix orenii (strain H 168 / OCM 544 / DSM 9562)).